Here is a 434-residue protein sequence, read N- to C-terminus: UDP-glucose 6-dehydrogenase (434 aa).

NAD(+) contacts are provided by residues 2-19 (NITF…GIIM), Val-11, Asp-30, Lys-35, Thr-121, and Glu-152. Residues 148-152 (EFLRE), Lys-204, Asn-208, 249-253 (FLNAG), and Gly-257 each bind substrate. The Nucleophile role is filled by Cys-260. Lys-263 is a binding site for NAD(+). Lys-321 serves as a coordination point for substrate. Arg-328 contributes to the NAD(+) binding site.

It belongs to the UDP-glucose/GDP-mannose dehydrogenase family.

It carries out the reaction UDP-alpha-D-glucose + 2 NAD(+) + H2O = UDP-alpha-D-glucuronate + 2 NADH + 3 H(+). Its pathway is nucleotide-sugar biosynthesis; UDP-alpha-D-glucuronate biosynthesis; UDP-alpha-D-glucuronate from UDP-alpha-D-glucose: step 1/1. This is UDP-glucose 6-dehydrogenase (udg) from Rickettsia typhi (strain ATCC VR-144 / Wilmington).